The primary structure comprises 123 residues: Small ribosomal subunit protein uS13 (123 aa).

The tract at residues 89–123 (GRRHRSGLPVRGQRTRTNARTRKGKRKAVAKKKAK) is disordered. Positions 101 to 123 (QRTRTNARTRKGKRKAVAKKKAK) are enriched in basic residues.

Belongs to the universal ribosomal protein uS13 family. In terms of assembly, part of the 30S ribosomal subunit. Forms a loose heterodimer with protein S19. Forms two bridges to the 50S subunit in the 70S ribosome.

Functionally, located at the top of the head of the 30S subunit, it contacts several helices of the 16S rRNA. In the 70S ribosome it contacts the 23S rRNA (bridge B1a) and protein L5 of the 50S subunit (bridge B1b), connecting the 2 subunits; these bridges are implicated in subunit movement. Contacts the tRNAs in the A and P-sites. The polypeptide is Small ribosomal subunit protein uS13 (Cutibacterium acnes (strain DSM 16379 / KPA171202) (Propionibacterium acnes)).